The primary structure comprises 809 residues: Sodium/hydrogen exchanger 2 (809 aa).

Transmembrane regions (helical) follow at residues 107 to 127 (IVPESCLLIMVGLLLGGIIFG), 138 to 158 (TDVFFLYLLPPIVLDAGYFMP), 169 to 189 (IFWYAVVGTLWNSIGIGVSLF), 209 to 229 (LFGSLISAVDPVAVLAVFENI), 237 to 257 (ILVFGESLLNDAVTVVLYNLF), 278 to 298 (FFVVGIGGVLIGIFLGFIAAF), and 308 to 328 (VIEPLFVFLYSYLSYITAEMF). N-linked (GlcNAc...) asparagine glycosylation is present at Asn350. 4 consecutive transmembrane segments (helical) span residues 361-381 (YFMKMLSSVSETLIFIFMGVS), 392-412 (AFVCFTLAFCLIWRALGVFVL), 430-450 (FIIAYGGLRGAICFALVFLLP), and 459-479 (LFITAAIVVIFFTVFILGITI). Composition is skewed to basic and acidic residues over residues 648–660 (IRKDNSLNRERRA) and 793–809 (RASEPGNRKSRLGSDKP). Disordered stretches follow at residues 648 to 700 (IRKD…EADA) and 734 to 809 (EVDA…SDKP).

This sequence belongs to the monovalent cation:proton antiporter 1 (CPA1) transporter (TC 2.A.36) family. In terms of assembly, interacts with CHP1 and CHP2. In terms of tissue distribution, high levels in intestine and kidney. Strongly expressed in gastric epithelial cells, with particularly high expression levels in mucous cells.

Its subcellular location is the apical cell membrane. The catalysed reaction is Na(+)(in) + H(+)(out) = Na(+)(out) + H(+)(in). Plasma membrane Na(+)/H(+) antiporter. Mediates the electroneutral exchange of intracellular H(+) ions for extracellular Na(+). Major apical Na(+)/H(+) exchanger in the base of the colonic crypt. Controls in the colonic crypt intracellular pH (pHi) to direct colonic epithelial cell differentiation into the absorptive enterocyte lineage at the expense of the secretory lineage. In Oryctolagus cuniculus (Rabbit), this protein is Sodium/hydrogen exchanger 2 (SLC9A2).